The primary structure comprises 113 residues: Large ribosomal subunit protein bL19 (113 aa).

The protein belongs to the bacterial ribosomal protein bL19 family.

In terms of biological role, this protein is located at the 30S-50S ribosomal subunit interface and may play a role in the structure and function of the aminoacyl-tRNA binding site. The polypeptide is Large ribosomal subunit protein bL19 (Mycolicibacterium smegmatis (strain ATCC 700084 / mc(2)155) (Mycobacterium smegmatis)).